Consider the following 369-residue polypeptide: Phospho-N-acetylmuramoyl-pentapeptide-transferase (369 aa).

The next 10 helical transmembrane spans lie at 2 to 22 (IPLL…TQLF), 55 to 75 (AVVI…SWWI), 82 to 102 (PSVS…VGFL), 120 to 140 (AKLI…INFA), 163 to 183 (LAFA…NLII), 196 to 216 (LDGL…LIGI), 240 to 260 (PLDL…FLWW), 267 to 287 (IFMG…FAIL), 292 to 312 (ILLA…ILQV), and 349 to 369 (ILGG…WVVF).

The protein belongs to the glycosyltransferase 4 family. MraY subfamily. It depends on Mg(2+) as a cofactor.

It is found in the cell membrane. It carries out the reaction UDP-N-acetyl-alpha-D-muramoyl-L-alanyl-gamma-D-glutamyl-meso-2,6-diaminopimeloyl-D-alanyl-D-alanine + di-trans,octa-cis-undecaprenyl phosphate = di-trans,octa-cis-undecaprenyl diphospho-N-acetyl-alpha-D-muramoyl-L-alanyl-D-glutamyl-meso-2,6-diaminopimeloyl-D-alanyl-D-alanine + UMP. The protein operates within cell wall biogenesis; peptidoglycan biosynthesis. In terms of biological role, catalyzes the initial step of the lipid cycle reactions in the biosynthesis of the cell wall peptidoglycan: transfers peptidoglycan precursor phospho-MurNAc-pentapeptide from UDP-MurNAc-pentapeptide onto the lipid carrier undecaprenyl phosphate, yielding undecaprenyl-pyrophosphoryl-MurNAc-pentapeptide, known as lipid I. In Renibacterium salmoninarum (strain ATCC 33209 / DSM 20767 / JCM 11484 / NBRC 15589 / NCIMB 2235), this protein is Phospho-N-acetylmuramoyl-pentapeptide-transferase.